Here is a 279-residue protein sequence, read N- to C-terminus: uncharacterized protein (279 aa).

Disordered stretches follow at residues 50 to 109 and 249 to 279; these read YTYN…YNKN and SQSQ…SPKL. The segment covering 68–109 has biased composition (low complexity); sequence NNNSNYNNNNNNNNNNNNNNNNNNNNNNNKNNNNNNYNYNKN.

This is an uncharacterized protein from Dictyostelium discoideum (Social amoeba).